Reading from the N-terminus, the 442-residue chain is tRNA modification GTPase MnmE (442 aa).

Positions 24, 82, and 120 each coordinate (6S)-5-formyl-5,6,7,8-tetrahydrofolate. In terms of domain architecture, TrmE-type G spans 217-367; the sequence is GLHIVITGEP…LISLIKEKAE (151 aa). GTP contacts are provided by residues 227–232, 246–252, and 271–274; these read NVGKST, SEYAGTT, and DTAG. Mg(2+) is bound by residues serine 231 and threonine 252. Lysine 442 is a binding site for (6S)-5-formyl-5,6,7,8-tetrahydrofolate.

This sequence belongs to the TRAFAC class TrmE-Era-EngA-EngB-Septin-like GTPase superfamily. TrmE GTPase family. As to quaternary structure, homodimer. Heterotetramer of two MnmE and two MnmG subunits. Requires K(+) as cofactor.

It is found in the cytoplasm. In terms of biological role, exhibits a very high intrinsic GTPase hydrolysis rate. Involved in the addition of a carboxymethylaminomethyl (cmnm) group at the wobble position (U34) of certain tRNAs, forming tRNA-cmnm(5)s(2)U34. In Wolbachia sp. subsp. Drosophila simulans (strain wRi), this protein is tRNA modification GTPase MnmE.